Reading from the N-terminus, the 437-residue chain is Citrate synthase (437 aa).

Catalysis depends on residues His316 and Asp372.

The protein belongs to the citrate synthase family. As to quaternary structure, homohexamer.

It carries out the reaction oxaloacetate + acetyl-CoA + H2O = citrate + CoA + H(+). Its pathway is carbohydrate metabolism; tricarboxylic acid cycle; isocitrate from oxaloacetate: step 1/2. With respect to regulation, weakly inhibited by ATP (apparent Ki = 10 mm). This Corynebacterium glutamicum (strain ATCC 13032 / DSM 20300 / JCM 1318 / BCRC 11384 / CCUG 27702 / LMG 3730 / NBRC 12168 / NCIMB 10025 / NRRL B-2784 / 534) protein is Citrate synthase (gltA).